A 372-amino-acid chain; its full sequence is NAD(P)H-quinone oxidoreductase subunit 1 (372 aa).

8 helical membrane passes run 27 to 47, 97 to 117, 128 to 148, 166 to 186, 204 to 224, 266 to 286, 308 to 328, and 347 to 367; these read LIWL…GVLV, LLFT…WLIV, VGIG…GLLM, AAQS…VVMM, LLSW…ICAL, VLSS…PIPV, SVGI…AILL, and FLLP…LAFP.

It belongs to the complex I subunit 1 family. NDH-1 is composed of at least 11 different subunits.

The protein resides in the cellular thylakoid membrane. It catalyses the reaction a plastoquinone + NADH + (n+1) H(+)(in) = a plastoquinol + NAD(+) + n H(+)(out). The enzyme catalyses a plastoquinone + NADPH + (n+1) H(+)(in) = a plastoquinol + NADP(+) + n H(+)(out). In terms of biological role, NDH-1 shuttles electrons from an unknown electron donor, via FMN and iron-sulfur (Fe-S) centers, to quinones in the respiratory and/or the photosynthetic chain. The immediate electron acceptor for the enzyme in this species is believed to be plastoquinone. Couples the redox reaction to proton translocation, and thus conserves the redox energy in a proton gradient. In Prochlorococcus marinus (strain MIT 9313), this protein is NAD(P)H-quinone oxidoreductase subunit 1.